The primary structure comprises 81 residues: Antitoxin MT2731 (81 aa).

In terms of biological role, antitoxin component of a type II toxin-antitoxin (TA) system. Neutralizes the effect of cognate toxin MT2730. This is Antitoxin MT2731 from Mycobacterium tuberculosis (strain CDC 1551 / Oshkosh).